Here is a 262-residue protein sequence, read N- to C-terminus: MQEAQYLTSDLSVKAKASNLNLWYGQKQALHDINIDIYERKITALIGPSGCGKSTFLRCLNRMNDLVGGCRVEGLVEVDGFNIYDPAIDVVAVRKRVGMVFQQPNPFPKSIYENIAYAPLMHDLVKKGSDCDQLVEESLKGAGLWEEVKDKLKSPGTALSGGQQQRLCIARAIAVKPEIILMDEPTSALDPISTQTIENLMVTLKEQFTIVVVTHNMQQAARVANYTAFFHLGELIEYDETEKIFVSPQKSKTEQYITGKFG.

In terms of domain architecture, ABC transporter spans 15–257 (AKASNLNLWY…PQKSKTEQYI (243 aa)). 47-54 (GPSGCGKS) is an ATP binding site.

It belongs to the ABC transporter superfamily. Phosphate importer (TC 3.A.1.7) family. As to quaternary structure, the complex is composed of two ATP-binding proteins (PstB), two transmembrane proteins (PstC and PstA) and a solute-binding protein (PstS).

Its subcellular location is the cell inner membrane. It carries out the reaction phosphate(out) + ATP + H2O = ADP + 2 phosphate(in) + H(+). Its function is as follows. Part of the ABC transporter complex PstSACB involved in phosphate import. Responsible for energy coupling to the transport system. The protein is Phosphate import ATP-binding protein PstB of Wolinella succinogenes (strain ATCC 29543 / DSM 1740 / CCUG 13145 / JCM 31913 / LMG 7466 / NCTC 11488 / FDC 602W) (Vibrio succinogenes).